A 468-amino-acid chain; its full sequence is Glutamine synthetase (468 aa).

The 85-residue stretch at 13 to 97 (NEVKFVDLRF…IRCDILEPAT (85 aa)) folds into the GS beta-grasp domain. The GS catalytic domain maps to 105-468 (PRSIAKRAED…PVEFELYYSV (364 aa)). 2 residues coordinate Mg(2+): E130 and E132. An ATP-binding site is contributed by E208. Mg(2+) contacts are provided by E213 and E220. Residues 264–265 (NG) and G265 each bind L-glutamate. H269 provides a ligand contact to Mg(2+). ATP-binding positions include 271–273 (HQS) and S273. R321, E327, and R339 together coordinate L-glutamate. ATP contacts are provided by R339, R344, and K352. Mg(2+) is bound at residue E357. R359 serves as a coordination point for L-glutamate. O-AMP-tyrosine is present on Y397.

Belongs to the glutamine synthetase family. As to quaternary structure, oligomer of 12 subunits arranged in the form of two hexameric ring. The cofactor is Mg(2+).

Its subcellular location is the cytoplasm. The enzyme catalyses L-glutamate + NH4(+) + ATP = L-glutamine + ADP + phosphate + H(+). Its activity is regulated as follows. The activity of this enzyme could be controlled by adenylation under conditions of abundant glutamine. Catalyzes the ATP-dependent biosynthesis of glutamine from glutamate and ammonia. This is Glutamine synthetase from Vibrio alginolyticus.